An 861-amino-acid chain; its full sequence is MVNISDFFGKNKKSVRSSTSRPTRQVGSSKPEVIDLDTESDQESTNKTPKKMPVSNVIDVSETPEGEKKLPLPAKRKASSPTVKPASSKKTKPSSKSSDSASNITAQDVLDKIPSLDLSNVHVKENAKFDFKSANSNADPDEIVSEIGSFPEGKPNCLLGLTIVFTGVLPTLERGASEALAKRYGARVTKSISSKTSVVVLGDEAGPKKLEKIKQLKIKAIDEEGFKQLIAGMPAEGGDGEAAEKARRKLEEQHNIATKEAELLVKKEEERSKKLAATRVSGGHLERDNVVREEDKLWTVKYAPTNLQQVCGNKGSVMKLKNWLANWENSKKNSFKHAGKDGSGVFRAAMLYGPPGIGKTTAAHLVAQELGYDILEQNASDVRSKTLLNAGVKNALDNMSVVGYFKHNEEAQNLNGKHFVIIMDEVDGMSGGDRGGVGQLAQFCRKTSTPLILICNERNLPKMRPFDRVCLDIQFRRPDANSIKSRLMTIAIREKFKLDPNVIDRLIQTTRGDIRQVINLLSTISTTTKTINHENINEISKAWEKNIALKPFDIAHKMLDGQIYSDIGSRNFTLNDKIALYFDDFDFTPLMIQENYLSTRPSVLKPGQSHLEAVAEAANCISLGDIVEKKIRSSEQLWSLLPLHAVLSSVYPASKVAGHMAGRINFTAWLGQNSKSAKYYRLLQEIHYHTRLGTSTDKIGLRLDYLPTFRKRLLDPFLKQGADAISSVIEVMDDYYLTKEDWDSIMEFFVGPDVTTAIIKKIPATVKSGFTRKYNSMTHPVAIYRTGSTIGGGGVGTSTSTPDFEDVVDADDNPVPADDEETQDSSTDLKKDKLIKQKAKPTKRKTATSKPGGSKKRKTKA.

Positions 1–103 are disordered; the sequence is MVNISDFFGK…SSKSSDSASN (103 aa). Polar residues predominate over residues 16 to 28; the sequence is RSSTSRPTRQVGS. Thr-38 bears the Phosphothreonine mark. Ser-40 carries the post-translational modification Phosphoserine. A Phosphothreonine modification is found at Thr-63. Residues 153–243 form the BRCT domain; the sequence is GKPNCLLGLT…PAEGGDGEAA (91 aa). Residues Thr-299, Cys-311, 353-361, and Asn-456 contribute to the ATP site; that span reads GPPGIGKTT. The interval 788 to 861 is disordered; sequence STIGGGGVGT…GGSKKRKTKA (74 aa). A compositionally biased stretch (acidic residues) spans 803 to 823; sequence DFEDVVDADDNPVPADDEETQ. 2 consecutive short sequence motifs (nuclear localization signal) follow at residues 830-834 and 855-860; these read KKDKL and KKRKTK. Over residues 836 to 861 the composition is skewed to basic residues; it reads KQKAKPTKRKTATSKPGGSKKRKTKA.

It belongs to the activator 1 large subunit family. Replication factor C (RFC) is a heteropentamer of subunits RFC1, RFC2, RFC3, RFC4 and RFC5 and forms a complex with POL30/PCNA in the presence of ATP. Interacts with ECO1 and POL30/PCNA.

It localises to the nucleus. Its function is as follows. Component of the ATP-dependent clamp loader RFC complex for the POL30/PCNA homotrimer DNA clamp. During a clamp loading circle, the RFC:clamp complex binds to DNA and the recognition of the double-stranded/single-stranded junction stimulates ATP hydrolysis by RFC. The complex presumably provides bipartite ATP sites in which one subunit supplies a catalytic site for hydrolysis of ATP bound to the neighboring subunit. Dissociation of RFC from the clamp leaves the clamp encircling DNA. Replication factor C (RFC or activator 1) complex acts during elongation of primed DNA templates by DNA polymerase delta and epsilon. RFC has an essential but redundant activity in sister chromatid cohesion establishment. The polypeptide is Replication factor C subunit 1 (RFC1) (Saccharomyces cerevisiae (strain ATCC 204508 / S288c) (Baker's yeast)).